The sequence spans 265 residues: Mlc titration factor A (265 aa).

Zn(2+) is bound by residues H111, H148, H152, and E211.

This sequence belongs to the MtfA family. Interacts with Mlc. Zn(2+) is required as a cofactor.

Its subcellular location is the cytoplasm. Functionally, involved in the modulation of the activity of the glucose-phosphotransferase system (glucose-PTS). Interacts with the transcriptional repressor Mlc, preventing its interaction with DNA and leading to the modulation of expression of genes regulated by Mlc, including ptsG, which encodes the PTS system glucose-specific EIICB component. Its function is as follows. Shows zinc-dependent metallopeptidase activity. This chain is Mlc titration factor A, found in Escherichia coli O127:H6 (strain E2348/69 / EPEC).